Consider the following 272-residue polypeptide: Shikimate dehydrogenase (NADP(+)) (272 aa).

Shikimate is bound by residues 14–16 and Thr-61; that span reads SRS. The active-site Proton acceptor is Lys-65. Glu-77 is an NADP(+) binding site. Residues Asn-86 and Asp-102 each contribute to the shikimate site. NADP(+) is bound by residues 126–130, 149–154, and Met-213; these read GVGGA and NRTFPR. Tyr-215 provides a ligand contact to shikimate. Gly-237 serves as a coordination point for NADP(+).

The protein belongs to the shikimate dehydrogenase family. In terms of assembly, homodimer.

It carries out the reaction shikimate + NADP(+) = 3-dehydroshikimate + NADPH + H(+). The protein operates within metabolic intermediate biosynthesis; chorismate biosynthesis; chorismate from D-erythrose 4-phosphate and phosphoenolpyruvate: step 4/7. Its function is as follows. Involved in the biosynthesis of the chorismate, which leads to the biosynthesis of aromatic amino acids. Catalyzes the reversible NADPH linked reduction of 3-dehydroshikimate (DHSA) to yield shikimate (SA). The polypeptide is Shikimate dehydrogenase (NADP(+)) (Sodalis glossinidius (strain morsitans)).